Here is a 306-residue protein sequence, read N- to C-terminus: Lipoyl synthase (306 aa).

7 residues coordinate [4Fe-4S] cluster: Cys-55, Cys-60, Cys-66, Cys-81, Cys-85, Cys-88, and Ser-294. Residues 67-283 (WNHRTATFLL…RAYALARGFR (217 aa)) form the Radical SAM core domain.

The protein belongs to the radical SAM superfamily. Lipoyl synthase family. Requires [4Fe-4S] cluster as cofactor.

Its subcellular location is the cytoplasm. It carries out the reaction [[Fe-S] cluster scaffold protein carrying a second [4Fe-4S](2+) cluster] + N(6)-octanoyl-L-lysyl-[protein] + 2 oxidized [2Fe-2S]-[ferredoxin] + 2 S-adenosyl-L-methionine + 4 H(+) = [[Fe-S] cluster scaffold protein] + N(6)-[(R)-dihydrolipoyl]-L-lysyl-[protein] + 4 Fe(3+) + 2 hydrogen sulfide + 2 5'-deoxyadenosine + 2 L-methionine + 2 reduced [2Fe-2S]-[ferredoxin]. The protein operates within protein modification; protein lipoylation via endogenous pathway; protein N(6)-(lipoyl)lysine from octanoyl-[acyl-carrier-protein]: step 2/2. Its function is as follows. Catalyzes the radical-mediated insertion of two sulfur atoms into the C-6 and C-8 positions of the octanoyl moiety bound to the lipoyl domains of lipoate-dependent enzymes, thereby converting the octanoylated domains into lipoylated derivatives. This Chloroflexus aggregans (strain MD-66 / DSM 9485) protein is Lipoyl synthase.